The chain runs to 289 residues: Phospholipase C (289 aa).

An N-terminal signal peptide occupies residues M1–A25. The propeptide occupies N26–S51. Zn(2+) contacts are provided by W52, H65, D106, H120, H169, D173, H179, H193, and E197. Positions W52 to E289 constitute a Zn-dependent PLC domain.

Belongs to the bacterial zinc-metallophospholipase C family. In terms of assembly, forms monomers, dimers and higher order oligomers, but only the monomer is enzymatically active. Requires Zn(2+) as cofactor.

It localises to the secreted. It catalyses the reaction a 1,2-diacyl-sn-glycero-3-phosphocholine + H2O = phosphocholine + a 1,2-diacyl-sn-glycerol + H(+). The catalysed reaction is 1,2-dihexadecanoyl-sn-glycero-3-phosphocholine + H2O = 1,2-dihexadecanoyl-sn-glycerol + phosphocholine + H(+). It carries out the reaction 1-hexadecanoyl-2-(9Z-octadecenoyl)-sn-glycero-3-phosphocholine + H2O = 1-hexadecanoyl-2-(9Z-octadecenoyl)-sn-glycerol + phosphocholine + H(+). The enzyme catalyses 1,2-di-(9Z-octadecenoyl)-sn-glycero-3-phosphocholine + H2O = 1,2-di-(9Z-octadecenoyl)-sn-glycerol + phosphocholine + H(+). It catalyses the reaction a 1,2-diacyl-sn-glycero-3-phosphoethanolamine + H2O = phosphoethanolamine + a 1,2-diacyl-sn-glycerol + H(+). The catalysed reaction is 1,2-di-(9Z-octadecenoyl)-sn-glycero-3-phosphoethanolamine + H2O = phosphoethanolamine + 1,2-di-(9Z-octadecenoyl)-sn-glycerol + H(+). It carries out the reaction 1,2-dihexadecanoyl-sn-glycero-3-phosphoethanolamine + H2O = 1,2-dihexadecanoyl-sn-glycerol + phosphoethanolamine + H(+). The enzyme catalyses a 1,2-diacyl-sn-glycero-3-phospho-L-serine + H2O = O-phospho-L-serine + a 1,2-diacyl-sn-glycerol + H(+). It catalyses the reaction a 1,2-diacyl-sn-glycero-3-phosphoglycerol + H2O = glycerol 1-phosphate + a 1,2-diacyl-sn-glycerol + H(+). The catalysed reaction is a 1,2-diacyl-sn-glycero-3-phospho-(1D-myo-inositol) + H2O = 1D-myo-inositol 1-phosphate + a 1,2-diacyl-sn-glycerol + H(+). It carries out the reaction a sphingomyelin + H2O = phosphocholine + an N-acylsphing-4-enine + H(+). The enzyme catalyses a 1-O-(1Z-alkenyl)-2-acyl-sn-glycero-3-phosphoethanolamine + H2O = a 1-O-(1Z-alkenyl)-2-acyl-sn-glycerol + phosphoethanolamine + H(+). With respect to regulation, enzymatic activity of LmPC-PLC can be specifically inhibited by its propeptide added in trans. The tendency of the enzyme to oligomerize, which appears to largely attenuate the enzymatic activity, may be one of the mechanisms regulating phospholipase activity in the host cell during the different steps of the infection cycle of L.monocytogenes. Enzyme activity is inhibited by EDTA and o-phenanthroline in vitro. Functionally, major virulence factor whose phospholipase activity facilitates pore formation by the pore-forming toxin listeriolysin O (LLO), leading to vacuolar membrane disruption and vacuolar escape of L.monocytogenes, which enables the bacterium to spread in the host. Acts as a phospholipase C exhibiting broad substrate specificity, with the highest activities towards diacylglycerophospholipids with phosphocholine, phosphoserine, and phosphoethanolamine head groups, but less towards phosphoglycerol or phosphoinositol head groups. Is also able to hydrolyze sphingomyelin and plasmenylethanolamine. This chain is Phospholipase C, found in Listeria monocytogenes serovar 1/2a (strain ATCC BAA-679 / EGD-e).